The primary structure comprises 503 residues: ATP synthase subunit beta (503 aa).

Glycine 157 to threonine 164 is a binding site for ATP.

Belongs to the ATPase alpha/beta chains family. In terms of assembly, F-type ATPases have 2 components, CF(1) - the catalytic core - and CF(0) - the membrane proton channel. CF(1) has five subunits: alpha(3), beta(3), gamma(1), delta(1), epsilon(1). CF(0) has three main subunits: a(1), b(2) and c(9-12). The alpha and beta chains form an alternating ring which encloses part of the gamma chain. CF(1) is attached to CF(0) by a central stalk formed by the gamma and epsilon chains, while a peripheral stalk is formed by the delta and b chains.

The protein localises to the cell inner membrane. It carries out the reaction ATP + H2O + 4 H(+)(in) = ADP + phosphate + 5 H(+)(out). In terms of biological role, produces ATP from ADP in the presence of a proton gradient across the membrane. The catalytic sites are hosted primarily by the beta subunits. The chain is ATP synthase subunit beta from Flavobacterium psychrophilum (strain ATCC 49511 / DSM 21280 / CIP 103535 / JIP02/86).